The following is a 151-amino-acid chain: Prefoldin subunit alpha (151 aa).

The protein belongs to the prefoldin subunit alpha family. As to quaternary structure, heterohexamer of two alpha and four beta subunits.

It localises to the cytoplasm. Its function is as follows. Molecular chaperone capable of stabilizing a range of proteins. Seems to fulfill an ATP-independent, HSP70-like function in archaeal de novo protein folding. In Aeropyrum pernix (strain ATCC 700893 / DSM 11879 / JCM 9820 / NBRC 100138 / K1), this protein is Prefoldin subunit alpha (pfdA).